The primary structure comprises 59 residues: UPF0391 membrane protein lpp2589 (59 aa).

2 helical membrane passes run 5–25 (ALIF…GIAV) and 30–50 (IAKI…IMGL).

Belongs to the UPF0391 family.

Its subcellular location is the cell membrane. The chain is UPF0391 membrane protein lpp2589 from Legionella pneumophila (strain Paris).